The chain runs to 437 residues: GTPase Obg (437 aa).

Positions 2-161 (SDFIDRALIT…RELQLELKVI (160 aa)) constitute an Obg domain. Positions 162-335 (ADVGLVGFPN…LQRRIVDILR (174 aa)) constitute an OBG-type G domain. Residues 168–175 (GFPNAGKS), 193–197 (FTTLS), 214–217 (DIPG), 284–287 (NKTD), and 316–318 (SAA) each bind GTP. Mg(2+)-binding residues include Ser-175 and Thr-195. The OCT domain occupies 355 to 433 (FSNIDPNDFW…IEKAELLWQD (79 aa)).

This sequence belongs to the TRAFAC class OBG-HflX-like GTPase superfamily. OBG GTPase family. Monomer. Mg(2+) serves as cofactor.

The protein resides in the cytoplasm. Functionally, an essential GTPase which binds GTP, GDP and possibly (p)ppGpp with moderate affinity, with high nucleotide exchange rates and a fairly low GTP hydrolysis rate. Plays a role in control of the cell cycle, stress response, ribosome biogenesis and in those bacteria that undergo differentiation, in morphogenesis control. The sequence is that of GTPase Obg from Herpetosiphon aurantiacus (strain ATCC 23779 / DSM 785 / 114-95).